We begin with the raw amino-acid sequence, 360 residues long: Peptide chain release factor 1 (360 aa).

Gln-235 carries the post-translational modification N5-methylglutamine.

This sequence belongs to the prokaryotic/mitochondrial release factor family. In terms of processing, methylated by PrmC. Methylation increases the termination efficiency of RF1.

It localises to the cytoplasm. In terms of biological role, peptide chain release factor 1 directs the termination of translation in response to the peptide chain termination codons UAG and UAA. The polypeptide is Peptide chain release factor 1 (Burkholderia cenocepacia (strain HI2424)).